The sequence spans 122 residues: Large ribosomal subunit protein uL14c (122 aa).

Belongs to the universal ribosomal protein uL14 family. Part of the 50S ribosomal subunit.

It localises to the plastid. The protein resides in the chloroplast. In terms of biological role, binds to 23S rRNA. The polypeptide is Large ribosomal subunit protein uL14c (Physcomitrium patens (Spreading-leaved earth moss)).